The primary structure comprises 276 residues: Triple specificity protein phosphatase PtpB (276 aa).

Residue C160 is the Phosphocysteine intermediate of the active site. A UIM-like region region spans residues L232–Y250.

It belongs to the protein-tyrosine phosphatase family. As to quaternary structure, interacts (via UIM-like region) with host ubiquitin; activating the phosphatidylinositol phosphate phosphatase activity.

It localises to the secreted. It is found in the host cytoplasm. The protein resides in the host cell membrane. It catalyses the reaction O-phospho-L-tyrosyl-[protein] + H2O = L-tyrosyl-[protein] + phosphate. The enzyme catalyses O-phospho-L-seryl-[protein] + H2O = L-seryl-[protein] + phosphate. It carries out the reaction O-phospho-L-threonyl-[protein] + H2O = L-threonyl-[protein] + phosphate. The catalysed reaction is 1,2-dioctanoyl-sn-glycero-3-phospho-(1-D-myo-inositol-3-phosphate) + H2O = 1,2-dioctanoyl-sn-glycero-3-phospho-(1D-myo-inositol) + phosphate. It catalyses the reaction 1,2-dioctanoyl-sn-glycero-3-phospho-(1-D-myo-inositol-4-phosphate) + H2O = 1,2-dioctanoyl-sn-glycero-3-phospho-(1D-myo-inositol) + phosphate. The enzyme catalyses 1,2-dioctanoyl-sn-glycero-3-phospho-(1D-myo-inositol-5-phosphate) + H2O = 1,2-dioctanoyl-sn-glycero-3-phospho-(1D-myo-inositol) + phosphate. Its activity is regulated as follows. Binding to host ubiquitin is required to activate the phosphatidylinositol phosphate phosphatase activity. Phosphatase activity is inhibited by sodium orthovanadate, a specific inhibitor of tyrosine phosphatases, but not by okadaic acid, an inhibitor of serine/threonine phosphatases. Inhibition of the enzyme reduces mycobacterial survival in infected macrophages. Inhibitors also enhance killing efficacy by first-line antibiotics. Functionally, essential virulence factor that promotes mycobacterial survival within host macrophages. Acts as a phosphatase that possesses triple substrate specificity toward phosphotyrosine, phosphoserine/threonine and phosphoinositides. Supports mycobacteria survival during infection by modulating the normal host signaling pathways, attenuating the bactericidal immune responses and promoting the host cell survival. Inhibits host pyroptosis by disrupting the membrane localization of host gasdermin-D (GSDMD): acts by catalyzing dephosphorylation of phosphatidylinositol (4,5)-bisphosphate and phosphatidylinositol 4-phosphate, thereby inhibiting the membrane targeting of GSDMD and subsequent cytokine release and pyroptosis. Inhibits host inflammatory responses and apoptosis through impeding the NF-kappa-B and MAPK signal pathways and TP53/p53 expression in the macrophage. Blocks the IL6/IL-6 production by down-regulating ERK1/2, p38 and p65 activity. Prevents macrophage cell death by activating the Akt pathway and blocking caspase 3 activity. Reduces the expression of iNOS in activated macrophages and inhibits the generation of destroying reactive nitrogen intermediate NO. In Mycobacterium tuberculosis (strain ATCC 25618 / H37Rv), this protein is Triple specificity protein phosphatase PtpB.